Here is a 493-residue protein sequence, read N- to C-terminus: MTDLTSLTIAEARAKLSAKEITAVELTDAYLGAIEAANETINAYVAVTPEKAREMAKASDARIAAGNAAALEGIPLGIKDLFGTEGIHTQACSHILDGFEPRYESTVTQNLWNDGAVMLGKLNMDEFAMGSSNETSYYGPVKNPWRAKGSNLDLVPGGSSGGSAAAVAARLCAGATATDTGGSIRQPAAFTGTVGIKPTYGRCSRWGVVAFASSLDQAGPIARDVRDAAILLKSMASIDPKDTTSVDLPVPDYEAAIGQSIKGMRIGIPKEYRVDGMPEDIEALWQQGIAWLRDAGAEIVDISLPHTKYALPAYYIVAPAEASSNLARYDGVRYGLRVDGKDIIDMYEKTRAAGFGQEVKRRIMIGTYVLSAGYYDAYYLRAQKVRTLIKRDFELAFQAGVDAILTPATPSSAFGIADEDLASDPVKMYLNDIFTVTVNMAGLPGIAVPGGLDRKGLPLGLQLIGKPFEEETLFKTAHVIEQAAGRFTASKWW.

Residues Lys79 and Ser159 each act as charge relay system in the active site. Catalysis depends on Ser183, which acts as the Acyl-ester intermediate.

The protein belongs to the amidase family. GatA subfamily. Heterotrimer of A, B and C subunits.

It catalyses the reaction L-glutamyl-tRNA(Gln) + L-glutamine + ATP + H2O = L-glutaminyl-tRNA(Gln) + L-glutamate + ADP + phosphate + H(+). In terms of biological role, allows the formation of correctly charged Gln-tRNA(Gln) through the transamidation of misacylated Glu-tRNA(Gln) in organisms which lack glutaminyl-tRNA synthetase. The reaction takes place in the presence of glutamine and ATP through an activated gamma-phospho-Glu-tRNA(Gln). The polypeptide is Glutamyl-tRNA(Gln) amidotransferase subunit A (Rhizobium meliloti (strain 1021) (Ensifer meliloti)).